The chain runs to 731 residues: Inclusion body clearance protein IML2 (731 aa).

The tract at residues Met-1–Gln-26 is disordered. Over residues Ser-10–Gln-26 the composition is skewed to polar residues. Residues Ser-265, Ser-268, and Ser-378 each carry the phosphoserine modification. Thr-380 bears the Phosphothreonine mark. 2 positions are modified to phosphoserine: Ser-383 and Ser-392.

This sequence belongs to the IML2 family. As to quaternary structure, interacts with lipid droplet proteins PET10 and PDR16.

The protein localises to the cytoplasm. It localises to the nucleus. Inclusion body (IB) resident protein that interacts strongly with lipid droplet (LD) proteins. Involved in LD-mediated IB clearing after protein folding stress, probably by enabling access to the IBs of an LD-stored soluble sterol derivative that acts as a chaperone in inclusion clearing. The sequence is that of Inclusion body clearance protein IML2 from Saccharomyces cerevisiae (strain ATCC 204508 / S288c) (Baker's yeast).